Here is a 387-residue protein sequence, read N- to C-terminus: Lipid-A-disaccharide synthase (387 aa).

This sequence belongs to the LpxB family.

It catalyses the reaction a lipid X + a UDP-2-N,3-O-bis[(3R)-3-hydroxyacyl]-alpha-D-glucosamine = a lipid A disaccharide + UDP + H(+). It functions in the pathway bacterial outer membrane biogenesis; LPS lipid A biosynthesis. Functionally, condensation of UDP-2,3-diacylglucosamine and 2,3-diacylglucosamine-1-phosphate to form lipid A disaccharide, a precursor of lipid A, a phosphorylated glycolipid that anchors the lipopolysaccharide to the outer membrane of the cell. This is Lipid-A-disaccharide synthase from Nitrosococcus oceani (strain ATCC 19707 / BCRC 17464 / JCM 30415 / NCIMB 11848 / C-107).